A 307-amino-acid chain; its full sequence is Acetaldehyde dehydrogenase 1 (307 aa).

The Acyl-thioester intermediate role is filled by Cys132. NAD(+) contacts are provided by residues 163-171 (SVGPGTRKN) and Asn274.

Belongs to the acetaldehyde dehydrogenase family.

The enzyme catalyses acetaldehyde + NAD(+) + CoA = acetyl-CoA + NADH + H(+). The protein is Acetaldehyde dehydrogenase 1 (tesF) of Comamonas testosteroni (Pseudomonas testosteroni).